We begin with the raw amino-acid sequence, 315 residues long: Thioredoxin reductase (315 aa).

34–41 contacts FAD; it reads EGQKVGGQ. Residues Cys-134 and Cys-137 are joined by a disulfide bond. 282–291 contributes to the FAD binding site; the sequence is DIRVKSLRQV.

The protein belongs to the class-II pyridine nucleotide-disulfide oxidoreductase family. In terms of assembly, homodimer. FAD is required as a cofactor.

It localises to the cytoplasm. It carries out the reaction [thioredoxin]-dithiol + NADP(+) = [thioredoxin]-disulfide + NADPH + H(+). The protein is Thioredoxin reductase (trxB) of Peptoclostridium acidaminophilum (Eubacterium acidaminophilum).